A 118-amino-acid chain; its full sequence is Putative pterin-4-alpha-carbinolamine dehydratase (118 aa).

The protein belongs to the pterin-4-alpha-carbinolamine dehydratase family.

The enzyme catalyses (4aS,6R)-4a-hydroxy-L-erythro-5,6,7,8-tetrahydrobiopterin = (6R)-L-erythro-6,7-dihydrobiopterin + H2O. The polypeptide is Putative pterin-4-alpha-carbinolamine dehydratase (Xanthomonas oryzae pv. oryzae (strain PXO99A)).